A 495-amino-acid polypeptide reads, in one-letter code: Regulator of G-protein signaling 7 (495 aa).

One can recognise a DEP domain in the interval 37-112 (EKNGIPIRTV…DDGTFYRFQT (76 aa)). Phosphoserine occurs at positions 229 and 241. Positions 235–256 (NDIRSHSPTHTPTPETKPPTED) are disordered. Thr-243 carries the post-translational modification Phosphothreonine. The G protein gamma domain maps to 255-316 (EDELQQQIKY…LSDDTTFWEL (62 aa)). Residues 333–448 (GMDEALKDPV…IRSSAYQELL (116 aa)) enclose the RGS domain. A Phosphoserine modification is found at Ser-434.

As to quaternary structure, interacts with GNB5, forming the RGS7-GNB5 complex. Interacts with GPR158; promotes the GTPase activator activity of the RGS7-GNB5 complex in absence of glycine, in contrast GTPase activator activity of the RGS7-GNB5 complex is inhibited in presence of glycine. Interacts with GPR179. Interacts with PKD1; this prevents rapid proteasomal degradation. Interacts with RGS7BP, leading to regulate the subcellular location of the heterodimer formed with GNB5. Interacts (phosphorylated form) with 14-3-3 protein YWHAQ. Interacts with SNAPIN. Interacts with GNAI1. Interacts with GNAO1, GNAI3 and GNAZ. Post-translationally, palmitoylated. Ubiquitinated, leading to rapid proteasomal degradation. In terms of processing, phosphorylation and subsequent interaction with 14-3-3 proteins inhibits GAP activity.

It localises to the cytoplasm. Its subcellular location is the cytosol. The protein resides in the cell membrane. The protein localises to the membrane. GTPase activator component of the RGS7-GNB5 complex that regulates G protein-coupled receptor signaling cascades. The RGS7-GNB5 complex acts as an inhibitor signal transduction by promoting the GTPase activity of G protein alpha subunits, such as GNAO1, thereby driving them into their inactive GDP-bound form. May play a role in synaptic vesicle exocytosis. Glycine-dependent regulation of the RGS7-GNB5 complex by GPR158 affects mood and cognition via its ability to regulate neuronal excitability in L2/L3 pyramidal neurons of the prefrontal cortex. Modulates the activity of potassium channels that are activated by GNAO1 in response to muscarinic acetylcholine receptor M2/CHRM2 signaling. This is Regulator of G-protein signaling 7 (RGS7) from Homo sapiens (Human).